A 332-amino-acid polypeptide reads, in one-letter code: NAD-dependent protein deacetylase hst2 (332 aa).

A Deacetylase sirtuin-type domain is found at 7–269 (KHVDSSKHLE…RALCKLLGWS (263 aa)). Residues 35–55 (GAGI…TGIY) and 118–121 (QNID) each bind NAD(+). His138 functions as the Proton acceptor in the catalytic mechanism. Zn(2+) is bound by residues Cys146, Cys149, Cys170, and Cys173. NAD(+) contacts are provided by residues 210 to 212 (GTS), 235 to 237 (NRE), and Cys255.

The protein belongs to the sirtuin family. Class I subfamily. It depends on Zn(2+) as a cofactor.

The protein localises to the cytoplasm. The protein resides in the nucleus. It catalyses the reaction N(6)-acetyl-L-lysyl-[protein] + NAD(+) + H2O = 2''-O-acetyl-ADP-D-ribose + nicotinamide + L-lysyl-[protein]. In terms of biological role, NAD-dependent histone deacetylase, which could function in telomeric silencing, cell cycle progression and chromosome stability. This Schizosaccharomyces pombe (strain 972 / ATCC 24843) (Fission yeast) protein is NAD-dependent protein deacetylase hst2 (hst2).